The chain runs to 252 residues: CLAVATA3/ESR (CLE)-related protein 4A-2 (252 aa).

An N-terminal signal peptide occupies residues 1–21; it reads MAKNAMLCLLILRVVLALAFA. The tract at residues 21–83 is required for secretion from the host cytoplasm to the host apoplasm; sequence ATNKKGDEEP…SNQLPNNNWM (63 aa). The N-linked (GlcNAc...) asparagine glycan is linked to Asn-32. The disordered stretch occupies residues 116 to 252; sequence RKTGMHSQRH…APAGPDPIHH (137 aa). 4 stretches are compositionally biased toward basic and acidic residues: residues 125–137, 144–179, 186–200, and 207–242; these read HHEETTLEQEKRV, PIHHQDTTLEQEKRAVPAGPDPKHHEETTLEQEKRV, PIHHQDTTLEQEKRA, and PTHHEETTLEQEKRAVPAGPDPKHHEETTFEQEKRG. Residues 127 to 135 form an A-1 repeat; sequence EETTLEQEK. A 6 X approximate repeat A region spans residues 127–219; the sequence is EETTLEQEKR…HEETTLEQEK (93 aa). The CLE-1 repeat unit spans residues 136–147; sequence RVAGAGPDPIHH. Residues 136–252 form a 6 X approximate repeat CLE region; sequence RVAGAGPDPI…APAGPDPIHH (117 aa). The A-2 repeat unit spans residues 148–156; sequence QDTTLEQEK. The CLE-2 repeat unit spans residues 157–168; it reads RAVPAGPDPKHH. An A-3 repeat occupies 169–177; that stretch reads EETTLEQEK. One copy of the CLE-3 repeat lies at 178–189; the sequence is RVAGAGPDPIHH. Residues 190–198 form an A-4 repeat; that stretch reads QDTTLEQEK. The CLE-4 repeat unit spans residues 199 to 210; it reads RAVPAGPDPTHH. Residues 211–219 form an A-5 repeat; that stretch reads EETTLEQEK. Residues 220–231 form a CLE-5 repeat; the sequence is RAVPAGPDPKHH. The A-6 repeat unit spans residues 232 to 240; it reads EETTFEQEK. The CLE-6 repeat unit spans residues 241 to 252; sequence RGAPAGPDPIHH.

This sequence belongs to the CLV3/ESR signal peptide family. Highly expressed exclusively within the dorsal esophageal gland cell during syncytium formation in host plants.

It localises to the secreted. The protein resides in the host cytoplasm. The protein localises to the host extracellular space. It is found in the extracellular space. Its subcellular location is the apoplast. In terms of biological role, mimics host plant CLE extracellular signal peptides that regulate cell fate. May play a role in the differentiation or division of feeding cells (syncytia) induced in plant roots during infection. The protein is CLAVATA3/ESR (CLE)-related protein 4A-2 (CLE-4A-2) of Globodera rostochiensis (Golden nematode worm).